The sequence spans 245 residues: 1-(5-phosphoribosyl)-5-[(5-phosphoribosylamino)methylideneamino] imidazole-4-carboxamide isomerase (245 aa).

Aspartate 7 (proton acceptor) is an active-site residue. Residue aspartate 129 is the Proton donor of the active site.

The protein belongs to the HisA/HisF family.

The protein localises to the cytoplasm. The catalysed reaction is 1-(5-phospho-beta-D-ribosyl)-5-[(5-phospho-beta-D-ribosylamino)methylideneamino]imidazole-4-carboxamide = 5-[(5-phospho-1-deoxy-D-ribulos-1-ylimino)methylamino]-1-(5-phospho-beta-D-ribosyl)imidazole-4-carboxamide. The protein operates within amino-acid biosynthesis; L-histidine biosynthesis; L-histidine from 5-phospho-alpha-D-ribose 1-diphosphate: step 4/9. The sequence is that of 1-(5-phosphoribosyl)-5-[(5-phosphoribosylamino)methylideneamino] imidazole-4-carboxamide isomerase from Escherichia coli O45:K1 (strain S88 / ExPEC).